A 535-amino-acid chain; its full sequence is MPAKKTMAQRLGQALETMTRQCGQLPETPAYGSWLLGRVSESPSRRWVRIKRIVTVYIMTANLTGIVVALLVVTFAFPVPSIYTDAPWWVTFGVAPAYATLALAIGTYWITTRIVRASIRWAIEERAPSQADGRNTLLLPFRVAAVHLILWDIGGALLATLYGLANRVFVTIILFSVTICGVLVATNCYLFTEFALRPVAAKALEAGRPPRRFAPGIMGRTMTVWSLGSGVPVTGIATTALYVLLVHNLTETQLASAVLILSITTLIFGFLVMWILAWLTAAPVRVVRAALKRVEQGDLRGDLVVFDGTELGELQRGFNAMVNGLRERERVRDLFGRHVGREVAAAAERERPQLGGEDRHAAVVFVDIVGSTQLVDNQPAAHVVKLLNRFFAIVVNEVDRHHGLINKFAGDAALAIFGAPNRLDRPEDAALAAARAIADRLANEMPEVQAGIGVAAGQIVAGNVGAKQRFEYTVVGKPVNQAARLCELAKSHPARLLASSDTLHAASETERAHWSLGETVTLRGHEQPTRLAVPT.

Helical transmembrane passes span 63–83 (LTGI…PSIY), 90–110 (VTFG…TYWI), 143–163 (VAAV…TLYG), 168–188 (VFVT…ATNC), 226–246 (SLGS…VLLV), and 258–278 (VLIL…ILAW). The 52-residue stretch at 279–330 (LTAAPVRVVRAALKRVEQGDLRGDLVVFDGTELGELQRGFNAMVNGLRERER) folds into the HAMP domain. The region spanning 362-486 (AVVFVDIVGS…KPVNQAARLC (125 aa)) is the Guanylate cyclase domain.

This sequence belongs to the adenylyl cyclase class-3 family.

Its subcellular location is the cell membrane. This is an uncharacterized protein from Mycobacterium tuberculosis (strain ATCC 25618 / H37Rv).